A 138-amino-acid polypeptide reads, in one-letter code: Putative pre-16S rRNA nuclease (138 aa).

It belongs to the YqgF nuclease family.

Its subcellular location is the cytoplasm. Could be a nuclease involved in processing of the 5'-end of pre-16S rRNA. This Helicobacter hepaticus (strain ATCC 51449 / 3B1) protein is Putative pre-16S rRNA nuclease.